The chain runs to 232 residues: 5'-methylthioadenosine/S-adenosylhomocysteine nucleosidase (232 aa).

The active-site Proton acceptor is the glutamate 12. Substrate-binding positions include glycine 78, isoleucine 152, and 173–174 (ME). Residue aspartate 197 is the Proton donor of the active site.

It belongs to the PNP/UDP phosphorylase family. MtnN subfamily. In terms of assembly, homodimer.

It catalyses the reaction S-adenosyl-L-homocysteine + H2O = S-(5-deoxy-D-ribos-5-yl)-L-homocysteine + adenine. The enzyme catalyses S-methyl-5'-thioadenosine + H2O = 5-(methylsulfanyl)-D-ribose + adenine. It carries out the reaction 5'-deoxyadenosine + H2O = 5-deoxy-D-ribose + adenine. Its pathway is amino-acid biosynthesis; L-methionine biosynthesis via salvage pathway; S-methyl-5-thio-alpha-D-ribose 1-phosphate from S-methyl-5'-thioadenosine (hydrolase route): step 1/2. Catalyzes the irreversible cleavage of the glycosidic bond in both 5'-methylthioadenosine (MTA) and S-adenosylhomocysteine (SAH/AdoHcy) to adenine and the corresponding thioribose, 5'-methylthioribose and S-ribosylhomocysteine, respectively. Also cleaves 5'-deoxyadenosine, a toxic by-product of radical S-adenosylmethionine (SAM) enzymes, into 5-deoxyribose and adenine. Thus, is required for in vivo function of the radical SAM enzymes biotin synthase and lipoic acid synthase, that are inhibited by 5'-deoxyadenosine accumulation. The sequence is that of 5'-methylthioadenosine/S-adenosylhomocysteine nucleosidase from Escherichia coli O7:K1 (strain IAI39 / ExPEC).